The sequence spans 344 residues: Uroporphyrinogen decarboxylase (344 aa).

Substrate-binding positions include 23 to 27 (RQAGR), D73, Y149, T204, and H321.

The protein belongs to the uroporphyrinogen decarboxylase family. As to quaternary structure, homodimer.

It localises to the cytoplasm. It catalyses the reaction uroporphyrinogen III + 4 H(+) = coproporphyrinogen III + 4 CO2. It functions in the pathway porphyrin-containing compound metabolism; protoporphyrin-IX biosynthesis; coproporphyrinogen-III from 5-aminolevulinate: step 4/4. Functionally, catalyzes the decarboxylation of four acetate groups of uroporphyrinogen-III to yield coproporphyrinogen-III. The sequence is that of Uroporphyrinogen decarboxylase from Francisella tularensis subsp. novicida (strain U112).